We begin with the raw amino-acid sequence, 863 residues long: Desmocollin-2 (863 aa).

The propeptide occupies 1 to 89 (KFIGRVNLKE…QEKVLRRAKR (89 aa)). Cadherin domains follow at residues 90 to 197 (RWAP…APIF), 198 to 309 (TETS…LPTF), 310 to 423 (TRSS…GPEC), 424 to 528 (DPRV…VIPQ), and 529 to 644 (RTVV…ILGK). At 90–644 (RWAPIPCSVP…TGNREVILGK (555 aa)) the chain is on the extracellular side. The N-linked (GlcNAc...) asparagine glycan is linked to Asn-120. N-linked (GlcNAc...) asparagine glycans are attached at residues Asn-346, Asn-495, and Asn-579. The helical transmembrane segment at 645–665 (WAILAILLGIALLFCILFTLV) threads the bilayer. Residues 666–863 (CGATTGADKK…RTLAETCMKR (198 aa)) lie on the Cytoplasmic side of the membrane. 3 positions are modified to phosphoserine: Ser-826, Ser-830, and Ser-835.

Interacts with DSP, PKP2 and JUP. Interacts with DSG3; the interaction may limit the interaction of DSC3 with p38MAPK family members and therefore repress p38MAPK signaling activation. In terms of tissue distribution, expressed in esophagus and rumen. Weakly expressed in epithelia and cardiac muscle.

The protein resides in the cell membrane. It localises to the cell junction. The protein localises to the desmosome. A component of desmosome cell-cell junctions which are required for positive regulation of cellular adhesion. Promotes timely incorporation of DSG2 into desmosome intercellular junctions and promotes interaction of desmosome cell junctions with intermediate filament cytokeratin, via modulation of DSP phosphorylation. Plays an important role in desmosome-mediated maintenance of intestinal epithelial cell intercellular adhesion strength and barrier function. Positively regulates wound healing of intestinal mucosa via promotion of epithelial cell migration, and also plays a role in mechanotransduction of force between intestinal epithelial cells and extracellular matrix. May contribute to epidermal cell positioning (stratification) by mediating differential adhesiveness between cells that express different isoforms. The polypeptide is Desmocollin-2 (DSC2) (Bos taurus (Bovine)).